A 951-amino-acid chain; its full sequence is Bromodomain-containing protein 8 (951 aa).

N6-acetyllysine is present on lysine 85. The stretch at 97 to 171 (VRKLTAERVE…ATDAAYQARQ (75 aa)) forms a coiled coil. The segment at 161 to 273 (KATDAAYQAR…TPPPSPLLSE (113 aa)) is disordered. Residues 204–226 (TPTTMEEATSGVTPGTLPSTPVT) are compositionally biased toward polar residues. Serine 456 and serine 460 each carry phosphoserine. A disordered region spans residues 520–547 (EENDDPQSLPGPWEHPIQQERDKPVPLP). Lysine 542 participates in a covalent cross-link: Glycyl lysine isopeptide (Lys-Gly) (interchain with G-Cter in SUMO2). Lysine 554 is modified (N6-acetyllysine; alternate). Lysine 554 is covalently cross-linked (Glycyl lysine isopeptide (Lys-Gly) (interchain with G-Cter in SUMO1); alternate). Lysine 554 participates in a covalent cross-link: Glycyl lysine isopeptide (Lys-Gly) (interchain with G-Cter in SUMO2); alternate. Lysine 582 participates in a covalent cross-link: Glycyl lysine isopeptide (Lys-Gly) (interchain with G-Cter in SUMO2). The segment at 584 to 745 (EPTEPEPGMS…PVSESDDGFS (162 aa)) is disordered. Over residues 610–622 (PELRSQDSDEEPR) the composition is skewed to basic and acidic residues. A Glycyl lysine isopeptide (Lys-Gly) (interchain with G-Cter in SUMO2) cross-link involves residue lysine 648. Residue serine 652 is modified to Phosphoserine. The segment covering 673 to 688 (ETQHKFEMSDSLKEES) has biased composition (basic and acidic residues). Lysine 685 is covalently cross-linked (Glycyl lysine isopeptide (Lys-Gly) (interchain with G-Cter in SUMO2)). A phosphoserine mark is found at serine 694, serine 710, and serine 714. One can recognise a Bromo domain in the interval 779-884 (IQAQKIWKKA…RDVLEQIQQF (106 aa)). Residues 900–922 (AKSLRGRDSTRKQDASEKDSVPM) are disordered. The span at 904 to 919 (RGRDSTRKQDASEKDS) shows a compositional bias: basic and acidic residues.

In terms of assembly, component of the NuA4 histone acetyltransferase complex which contains the catalytic subunit KAT5/TIP60 and the subunits EP400, TRRAP/PAF400, BRD8/SMAP, EPC1, DMAP1/DNMAP1, RUVBL1/TIP49, RUVBL2, ING3, actin, ACTL6A/BAF53A, MORF4L1/MRG15, MORF4L2/MRGX, MRGBP, YEATS4/GAS41, VPS72/YL1 and MEAF6. Component of a NuA4-related complex which contains EP400, TRRAP/PAF400, SRCAP, BRD8/SMAP, EPC1, DMAP1/DNMAP1, RUVBL1/TIP49, RUVBL2, actin, ACTL6A/BAF53A, VPS72 and YEATS4/GAS41. BRD8 isoform 2 interacts with RXRA/NR2B1 and THRB/ERBA2. Component of a SWR1-like complex.

The protein localises to the nucleus. Functionally, may act as a coactivator during transcriptional activation by hormone-activated nuclear receptors (NR). Stimulates transcriptional activation by AR/DHTR, ESR1/NR3A1, RXRA/NR2B1 and THRB/ERBA2. Component of the NuA4 histone acetyltransferase (HAT) complex which is involved in transcriptional activation of select genes principally by acetylation of nucleosomal histones H4 and H2A. This modification may both alter nucleosome - DNA interactions and promote interaction of the modified histones with other proteins which positively regulate transcription. This complex may be required for the activation of transcriptional programs associated with oncogene and proto-oncogene mediated growth induction, tumor suppressor mediated growth arrest and replicative senescence, apoptosis, and DNA repair. NuA4 may also play a direct role in DNA repair when recruited to sites of DNA damage. Component of a SWR1-like complex that specifically mediates the removal of histone H2A.Z/H2AZ1 from the nucleosome. This Mus musculus (Mouse) protein is Bromodomain-containing protein 8 (Brd8).